The chain runs to 208 residues: Large ribosomal subunit protein bL25 (208 aa).

Residues Asp-163–Glu-208 are disordered. The span at Pro-198–Glu-208 shows a compositional bias: basic and acidic residues.

The protein belongs to the bacterial ribosomal protein bL25 family. CTC subfamily. Part of the 50S ribosomal subunit; part of the 5S rRNA/L5/L18/L25 subcomplex. Contacts the 5S rRNA. Binds to the 5S rRNA independently of L5 and L18.

Functionally, this is one of the proteins that binds to the 5S RNA in the ribosome where it forms part of the central protuberance. The sequence is that of Large ribosomal subunit protein bL25 from Bacillus licheniformis (strain ATCC 14580 / DSM 13 / JCM 2505 / CCUG 7422 / NBRC 12200 / NCIMB 9375 / NCTC 10341 / NRRL NRS-1264 / Gibson 46).